Here is a 101-residue protein sequence, read N- to C-terminus: Protein RnfH (101 aa).

It belongs to the UPF0125 (RnfH) family.

The protein is Protein RnfH of Coxiella burnetii (strain RSA 331 / Henzerling II).